A 385-amino-acid polypeptide reads, in one-letter code: Branched-chain-amino-acid aminotransferase, cytosolic (385 aa).

An N6-(pyridoxal phosphate)lysine modification is found at K221.

This sequence belongs to the class-IV pyridoxal-phosphate-dependent aminotransferase family. Homodimer. Pyridoxal 5'-phosphate is required as a cofactor. As to expression, expressed in muscles.

It localises to the cytoplasm. It catalyses the reaction L-leucine + 2-oxoglutarate = 4-methyl-2-oxopentanoate + L-glutamate. The catalysed reaction is L-isoleucine + 2-oxoglutarate = (S)-3-methyl-2-oxopentanoate + L-glutamate. The enzyme catalyses L-valine + 2-oxoglutarate = 3-methyl-2-oxobutanoate + L-glutamate. Its function is as follows. Catalyzes the first reaction in the catabolism of the essential branched chain amino acids leucine, isoleucine, and valine. The chain is Branched-chain-amino-acid aminotransferase, cytosolic (BCAT1) from Ovis aries (Sheep).